Here is a 214-residue protein sequence, read N- to C-terminus: Superoxide dismutase [Mn] (214 aa).

Residues His27, His82, Asp169, and His173 each contribute to the Mn(2+) site.

Belongs to the iron/manganese superoxide dismutase family. In terms of assembly, homodimer. It depends on Mn(2+) as a cofactor.

The catalysed reaction is 2 superoxide + 2 H(+) = H2O2 + O2. Destroys superoxide anion radicals which are normally produced within the cells and which are toxic to biological systems. This Pasteurella multocida (strain Pm70) protein is Superoxide dismutase [Mn] (sodA).